The following is a 218-amino-acid chain: Histone chaperone ASF1B (218 aa).

It belongs to the ASF1 family. Interacts with histone H3 and histone H4. Interacts strongly with the N-terminus of TOUSLED. Post-translationally, phosphorylated in vitro by TOUSLED.

The protein resides in the nucleus. Functionally, histone chaperone that facilitates histone deposition and histone exchange and removal during nucleosome assembly and disassembly. The protein is Histone chaperone ASF1B (ASF1B) of Arabidopsis thaliana (Mouse-ear cress).